A 453-amino-acid chain; its full sequence is UDP-glycosyltransferase 76E9 (453 aa).

UDP-alpha-D-glucose contacts are provided by residues serine 279, 337–339 (APQ), 354–362 (HCGWNSTLE), and 376–379 (TTDQ).

This sequence belongs to the UDP-glycosyltransferase family.

The sequence is that of UDP-glycosyltransferase 76E9 (UGT76E9) from Arabidopsis thaliana (Mouse-ear cress).